A 426-amino-acid chain; its full sequence is Enolase (426 aa).

Q163 is a binding site for (2R)-2-phosphoglycerate. E205 serves as the catalytic Proton donor. Positions 242, 283, and 310 each coordinate Mg(2+). (2R)-2-phosphoglycerate contacts are provided by K335, R364, S365, and K386. The active-site Proton acceptor is the K335.

Belongs to the enolase family. Mg(2+) serves as cofactor.

It is found in the cytoplasm. The protein localises to the secreted. Its subcellular location is the cell surface. It carries out the reaction (2R)-2-phosphoglycerate = phosphoenolpyruvate + H2O. The protein operates within carbohydrate degradation; glycolysis; pyruvate from D-glyceraldehyde 3-phosphate: step 4/5. Catalyzes the reversible conversion of 2-phosphoglycerate (2-PG) into phosphoenolpyruvate (PEP). It is essential for the degradation of carbohydrates via glycolysis. The polypeptide is Enolase (Clavibacter sepedonicus (Clavibacter michiganensis subsp. sepedonicus)).